Consider the following 274-residue polypeptide: uncharacterized protein (274 aa).

This is an uncharacterized protein from Rhodobacter capsulatus (Rhodopseudomonas capsulata).